Reading from the N-terminus, the 302-residue chain is Oxygen-dependent coproporphyrinogen-III oxidase (302 aa).

S94 is a substrate binding site. Residues H98 and H108 each coordinate a divalent metal cation. The active-site Proton donor is H108. 110-112 (NVR) is a binding site for substrate. Residues H147 and H177 each contribute to the a divalent metal cation site. Positions 242-277 (YVEFNLVFDRGTLFGLQSGGRAESILMSMPPVANWR) are important for dimerization. 260–262 (GGR) is a substrate binding site.

This sequence belongs to the aerobic coproporphyrinogen-III oxidase family. Homodimer. Requires a divalent metal cation as cofactor.

Its subcellular location is the cytoplasm. The enzyme catalyses coproporphyrinogen III + O2 + 2 H(+) = protoporphyrinogen IX + 2 CO2 + 2 H2O. Its pathway is porphyrin-containing compound metabolism; protoporphyrin-IX biosynthesis; protoporphyrinogen-IX from coproporphyrinogen-III (O2 route): step 1/1. Involved in the heme biosynthesis. Catalyzes the aerobic oxidative decarboxylation of propionate groups of rings A and B of coproporphyrinogen-III to yield the vinyl groups in protoporphyrinogen-IX. The protein is Oxygen-dependent coproporphyrinogen-III oxidase of Ralstonia pickettii (strain 12J).